The following is a 676-amino-acid chain: XK-related protein 5 (676 aa).

Helical transmembrane passes span 37 to 57 (WLAL…FLWF), 114 to 134 (LLEA…VFLA), 140 to 160 (IVPG…LVSY), 206 to 226 (VWVL…LVAQ), 239 to 259 (LFNL…WDSP), 266 to 286 (SFYL…TDFL), and 294 to 314 (LWTV…LVIY). 4 disordered regions span residues 336–362 (PIED…DSSS), 372–391 (TSLD…GLGE), 495–538 (LEDN…KEGQ), and 598–661 (PIPG…IQRD). Residues 498–509 (NATTQKPPATQE) show a composition bias toward polar residues.

It belongs to the XK family.

It is found in the cell membrane. This chain is XK-related protein 5, found in Mus musculus (Mouse).